The following is a 259-amino-acid chain: MYLRKPIQKIKSEVQIRLIRYYTASENAKVTYHEEMQNNFIATNIFQKALLTCGSAVIALLDPHRGDMIACLGEVTGENAIKYMHSKMLQTEEGQDILKNKPRINSKTIAFETLSQMPENSLGRVYADFMKDNNITADSRLPVQFIADPELAYVMQRYREVHDLVHASLFMKTNMLGEVTVKWVEGIQTKLPMCIGGGIWGAARLRPKHRQMYLKYYLPWAIRTGNNAKFLQGIYFEKRWEQDIDDFHKEMNIVRLLKK.

Zn(2+) contacts are provided by histidine 162, aspartate 163, histidine 166, and glutamate 178.

The protein belongs to the COQ4 family. As to quaternary structure, component of a multi-subunit COQ enzyme complex. It depends on Zn(2+) as a cofactor.

It localises to the mitochondrion inner membrane. The catalysed reaction is a 4-hydroxy-3-methoxy-5-(all-trans-polyprenyl)benzoate + H(+) = a 2-methoxy-6-(all-trans-polyprenyl)phenol + CO2. The protein operates within cofactor biosynthesis; ubiquinone biosynthesis. Its function is as follows. Lyase that catalyzes the C1-decarboxylation of 4-hydroxy-3-methoxy-5-(all-trans-polyprenyl)benzoic acid into 2-methoxy-6-(all-trans-polyprenyl)phenol during ubiquinone biosynthesis. This is Ubiquinone biosynthesis protein COQ4 homolog, mitochondrial from Bombyx mori (Silk moth).